The primary structure comprises 286 residues: Probable biotin transporter (286 aa).

EamA domains are found at residues 3–128 (YLLF…AIIR) and 139–277 (GFLL…LWVN). 10 consecutive transmembrane segments (helical) span residues 4-24 (LLFV…YLAG), 26-46 (VDSY…FLPL), 56-76 (FVGG…VCLY), 81-101 (VLTV…VALF), 109-129 (FNFW…IIRY), 136-156 (FLQG…GQVL), 174-194 (FGYF…LFGD), 203-223 (LQWG…QFWW), 234-254 (TLAV…LLIW), and 258-280 (ADLP…NRLG).

The protein belongs to the drug/metabolite transporter (DMT) superfamily. 10 TMS drug/metabolite exporter (DME) (TC 2.A.7.3) family.

The protein resides in the cell inner membrane. The enzyme catalyses biotin(in) = biotin(out). Its function is as follows. Uptake of biotin. In Pseudomonas aeruginosa (strain ATCC 15692 / DSM 22644 / CIP 104116 / JCM 14847 / LMG 12228 / 1C / PRS 101 / PAO1), this protein is Probable biotin transporter.